Consider the following 346-residue polypeptide: N-acetyl-gamma-glutamyl-phosphate reductase (346 aa).

Cys-151 is an active-site residue.

This sequence belongs to the NAGSA dehydrogenase family. Type 1 subfamily.

It is found in the cytoplasm. It carries out the reaction N-acetyl-L-glutamate 5-semialdehyde + phosphate + NADP(+) = N-acetyl-L-glutamyl 5-phosphate + NADPH + H(+). It participates in amino-acid biosynthesis; L-arginine biosynthesis; N(2)-acetyl-L-ornithine from L-glutamate: step 3/4. Functionally, catalyzes the NADPH-dependent reduction of N-acetyl-5-glutamyl phosphate to yield N-acetyl-L-glutamate 5-semialdehyde. This is N-acetyl-gamma-glutamyl-phosphate reductase from Ehrlichia canis (strain Jake).